The following is a 274-amino-acid chain: Rhamnulose-1-phosphate aldolase (274 aa).

Residue glutamate 117 is part of the active site. Positions 141, 143, and 212 each coordinate Zn(2+).

The protein belongs to the aldolase class II family. RhaD subfamily. Homotetramer. It depends on Zn(2+) as a cofactor.

The protein localises to the cytoplasm. It catalyses the reaction L-rhamnulose 1-phosphate = (S)-lactaldehyde + dihydroxyacetone phosphate. The protein operates within carbohydrate degradation; L-rhamnose degradation; glycerone phosphate from L-rhamnose: step 3/3. Catalyzes the reversible cleavage of L-rhamnulose-1-phosphate to dihydroxyacetone phosphate (DHAP) and L-lactaldehyde. In Escherichia coli O7:K1 (strain IAI39 / ExPEC), this protein is Rhamnulose-1-phosphate aldolase.